Consider the following 906-residue polypeptide: Ribonucleoside-diphosphate reductase large subunit-like protein (906 aa).

2 disordered regions span residues 1–70 (MNPA…AGNT) and 89–129 (VSWR…LSTF). Positions 98–109 (PDGTPSVLSLTR) are enriched in polar residues.

This sequence belongs to the ribonucleoside diphosphate reductase large chain family.

Its subcellular location is the virion. It localises to the host cytoplasm. Does not possess a ribonucleotide reductase activity. Betaherpesviruses probably use another strategy to expand the dNTP pool in a quiescent host cell. The protein is Ribonucleoside-diphosphate reductase large subunit-like protein of Homo sapiens (Human).